We begin with the raw amino-acid sequence, 546 residues long: Peptidoglycan transport ATP-binding protein YejF (546 aa).

2 ABC transporter domains span residues V12–L261 and I291–L530. ATP contacts are provided by residues G46–S53 and G323–T330.

Belongs to the ABC transporter superfamily. The complex is composed of one ATP-binding protein (YejF), two transmembrane proteins (YejB and YejE) and a solute-binding protein (YepA or YejA).

It is found in the cell inner membrane. Functionally, part of the ABC transporter complex YejBEF-YepA involved in the uptake of muropeptides, the breakdown products of cell wall peptidoglycan. The import of muropeptides into the cell enables peptidoglycan recycling, which is vital for cell wall integrity in this bacterium. Is also probably part of the ABC transporter complex YejABEF, which is likely involved in broad-spectrum peptide import. Responsible for energy coupling to the transport system. This Agrobacterium fabrum (strain C58 / ATCC 33970) (Agrobacterium tumefaciens (strain C58)) protein is Peptidoglycan transport ATP-binding protein YejF.